The following is a 123-amino-acid chain: MADETTVSTPAASGTETPSTGGGGAPQGRPQGGPRGDRGPRPGGSGRDGGRKFFRRKKVCKFCVEKIDAIDYKDVRLLGQFVAESGKIVPRRLTGVCTPHQRRLSDAIKQARNIALLPFASAR.

Positions 1–10 (MADETTVSTP) are enriched in polar residues. The interval 1–52 (MADETTVSTPAASGTETPSTGGGGAPQGRPQGGPRGDRGPRPGGSGRDGGRK) is disordered. Residues 20–34 (TGGGGAPQGRPQGGP) are compositionally biased toward gly residues.

It belongs to the bacterial ribosomal protein bS18 family. As to quaternary structure, part of the 30S ribosomal subunit. Forms a tight heterodimer with protein bS6.

In terms of biological role, binds as a heterodimer with protein bS6 to the central domain of the 16S rRNA, where it helps stabilize the platform of the 30S subunit. This Koribacter versatilis (strain Ellin345) protein is Small ribosomal subunit protein bS18.